The chain runs to 760 residues: Protein HEADING DATE 3B (760 aa).

Gly residues-rich tracts occupy residues 1–12 (MATRGGGGGGGG) and 60–70 (SGGGGGGGVGG). 4 disordered regions span residues 1–120 (MATR…KINK), 144–169 (SRSTAEAPQRRAENTIKSSSGKRLAD), 236–262 (VKSRTPLKDKEMEAAQTSKNVEVEKSS), and 285–346 (TGII…IEET). Residues 71 to 87 (SPAHSTSAASQSQSQSQ) are compositionally biased toward low complexity. Polar residues predominate over residues 94–107 (SLFQPFNVPSNRPG). The segment covering 108–120 (HSTEKINSDKINK) has biased composition (basic and acidic residues). Basic and acidic residues predominate over residues 236–248 (VKSRTPLKDKEME). The Nuclear localization signal motif lies at 349–355 (KRKRLLE). Disordered regions lie at residues 485 to 543 (LQQP…GVQL) and 707 to 760 (FPTV…QRDD). Polar residues-rich tracts occupy residues 511–522 (QRDQAATNGVSK), 531–543 (ASDNKQNNWGVQL), and 707–730 (FPTVSAQNNQPQPSYSSRDNQTNV).

Expressed in mesophyll cells of young leaves, anthers, stigmas and the top of lemmas.

It is found in the nucleus. Its function is as follows. Involved in the regulation of flowering time under short day (SD) and long day (LD) conditions. Functions as a floral promoter by negatively regulating GHD7, a repressor of the photoperiodic control of flowering. Acts as a floral activator in the LD photoperiodic pathway. Involved in blue light-induced activation of EHD1 expression to promote flowering under SD conditions. The sequence is that of Protein HEADING DATE 3B (HD3B) from Oryza sativa subsp. japonica (Rice).